The chain runs to 3413 residues: Protein pecanex (3413 aa).

The next 2 helical transmembrane spans lie at 33 to 53 (VVHL…YLYF) and 57 to 77 (WLTW…VKLA). Asn164 is a glycosylation site (N-linked (GlcNAc...) asparagine). A compositionally biased stretch (low complexity) spans 182–195 (GSQQDQQSLAGSAS). Disordered stretches follow at residues 182 to 213 (GSQQ…STSA) and 235 to 314 (GSSA…ENKL). Residues 196–213 (VSKSIRSTGPGGNSSTSA) show a composition bias toward polar residues. N-linked (GlcNAc...) asparagine glycosylation occurs at Asn208. The segment covering 302–312 (AAAAANSNAEN) has biased composition (low complexity). Asn317 is a glycosylation site (N-linked (GlcNAc...) asparagine). Disordered regions lie at residues 327–363 (PSFL…GDAP), 379–403 (LVNP…RLKH), 540–609 (PGTG…GTGG), and 625–651 (PSVS…NPLP). Polar residues predominate over residues 330 to 354 (LHSQPTNKARGQTNPRQHFITSAPS). Over residues 392–402 (RSSETHDERLK) the composition is skewed to basic and acidic residues. Positions 541-559 (GTGGSVTGGGGAAGGGGSA) are enriched in gly residues. N-linked (GlcNAc...) asparagine glycosylation is found at Asn569 and Asn581. The segment covering 569-582 (NATSYKHGSSQSNK) has biased composition (polar residues). The span at 599–609 (GTSGGAGGTGG) shows a compositional bias: gly residues. The segment covering 625 to 634 (PSVSNLSPHP) has biased composition (polar residues). The N-linked (GlcNAc...) asparagine glycan is linked to Asn685. Basic and acidic residues predominate over residues 720 to 730 (EKTAHEEHGDD). Disordered regions lie at residues 720–745 (EKTA…DDEV), 816–873 (HHHS…NRQP), 886–921 (RQEL…DCEQ), and 1002–1021 (KQTK…HSIS). The span at 816–826 (HHHSHLHHHKA) shows a compositional bias: basic residues. A compositionally biased stretch (low complexity) spans 828 to 846 (SVEGAGPSGGSVAVGVSAG). Over residues 847 to 856 (NDDEDEETED) the composition is skewed to acidic residues. The N-linked (GlcNAc...) asparagine glycan is linked to Asn857. The segment covering 1008–1021 (SRNSSSSNSTHSIS) has biased composition (low complexity). N-linked (GlcNAc...) asparagine glycosylation is found at Asn1010, Asn1015, Asn1069, and Asn1199. Helical transmembrane passes span 1315–1335 (MHVL…AAIL) and 1343–1363 (LCAL…VKSV). Asn1375 is a glycosylation site (N-linked (GlcNAc...) asparagine). 4 helical membrane-spanning segments follow: residues 1376 to 1396 (KTVA…LLLL), 1423 to 1443 (VVAL…IIFS), 1474 to 1494 (LLGS…LYGP), and 1504 to 1524 (GTQY…GYHL). N-linked (GlcNAc...) asparagine glycosylation occurs at Asn1572. Disordered regions lie at residues 1577-1675 (QLTT…TGEP), 1722-1744 (DKIS…GAGT), and 1760-1813 (AEAE…LPDP). 2 stretches are compositionally biased toward basic and acidic residues: residues 1587-1598 (RQTDVKTEHEQI) and 1607-1620 (TVNE…HGAD). Residues 1639–1666 (KTSSLGSSQQTLGKTISSSKRAITASSS) are compositionally biased toward low complexity. Residues 1725–1738 (SSSSATNPGDMSTL) show a composition bias toward polar residues. Repeat copies occupy residues 1776-1777 (GT), 1778-1779 (GT), 1780-1781 (GT), 1782-1783 (GT), and 1784-1785 (GT). The segment at 1776–1785 (GTGTGTGTGT) is 5 X 2 AA tandem repeats of G-T. 2 N-linked (GlcNAc...) asparagine glycosylation sites follow: Asn1791 and Asn1804. A compositionally biased stretch (low complexity) spans 1799 to 1808 (GNTNSNGTGN). Helical transmembrane passes span 1830 to 1850 (LVVM…TVFT), 1856 to 1876 (LNVV…YIVP), 1914 to 1934 (LYIY…AISS), 1940 to 1960 (QLIV…ICAL), and 1976 to 1996 (IIIF…ETFI). The tract at residues 2344–2463 (SMGGAPPAQA…HSFANISRQT (120 aa)) is disordered. Low complexity predominate over residues 2346–2370 (GGAPPAQAPAAAGGASSAPATAGVA). 2 N-linked (GlcNAc...) asparagine glycosylation sites follow: Asn2380 and Asn2387. A compositionally biased stretch (low complexity) spans 2389-2411 (SAHGGQAGPSSGQSKSQSQQQLR). A compositionally biased stretch (gly residues) spans 2437–2447 (GTGGVTGGGGD). Over residues 2449–2463 (QLSSSHSFANISRQT) the composition is skewed to polar residues. 3 N-linked (GlcNAc...) asparagine glycosylation sites follow: Asn2458, Asn2619, and Asn2717. Disordered stretches follow at residues 2908–2997 (LNRE…SSGS) and 3198–3242 (ESST…GDDG). Over residues 2940 to 2956 (RRPEVGSSRGRDHERRA) the composition is skewed to basic and acidic residues. N-linked (GlcNAc...) asparagine glycosylation occurs at Asn3246. The disordered stretch occupies residues 3295-3413 (AEESKEKGTA…NGESEAGTTV (119 aa)). Positions 3310 to 3323 (EGEEGVGEMEIEPE) are enriched in acidic residues. Positions 3364-3377 (TSSTSSAKSTSSPS) are enriched in low complexity. Residues 3380–3406 (QEEEDAVDPEETPELASEESPSDENGE) show a composition bias toward acidic residues.

The protein belongs to the pecanex family.

It localises to the membrane. Functionally, involved in neurogenesis. In Drosophila melanogaster (Fruit fly), this protein is Protein pecanex (pcx).